The sequence spans 89 residues: MSLSTEVKAKILADFGRCENDTGSTEVQVALLTAQINHLQAHFKEHIHDHHSRRGLLRMVSSRRKLTAYLKRTDVARYTALIQKLGLRR.

The protein belongs to the universal ribosomal protein uS15 family. As to quaternary structure, part of the 30S ribosomal subunit. Forms a bridge to the 50S subunit in the 70S ribosome, contacting the 23S rRNA.

In terms of biological role, one of the primary rRNA binding proteins, it binds directly to 16S rRNA where it helps nucleate assembly of the platform of the 30S subunit by binding and bridging several RNA helices of the 16S rRNA. Functionally, forms an intersubunit bridge (bridge B4) with the 23S rRNA of the 50S subunit in the ribosome. The sequence is that of Small ribosomal subunit protein uS15 from Shewanella baltica (strain OS223).